The following is a 301-amino-acid chain: Probable 5-dehydro-4-deoxyglucarate dehydratase (301 aa).

This sequence belongs to the DapA family.

The enzyme catalyses 5-dehydro-4-deoxy-D-glucarate + H(+) = 2,5-dioxopentanoate + CO2 + H2O. Its pathway is carbohydrate acid metabolism; D-glucarate degradation; 2,5-dioxopentanoate from D-glucarate: step 2/2. The protein is Probable 5-dehydro-4-deoxyglucarate dehydratase of Xanthobacter autotrophicus (strain ATCC BAA-1158 / Py2).